Consider the following 580-residue polypeptide: E3 ubiquitin-protein ligase TRIM45 (580 aa).

The RING-type zinc finger occupies 29–98 (CPLCMGLFKA…QIGILCPVCD (70 aa)). 2 consecutive B box-type zinc fingers follow at residues 130-176 (GQGL…MVDL) and 186-227 (GKPI…CDFT). Residues cysteine 135, cysteine 138, cysteine 158, histidine 162, cysteine 191, histidine 194, cysteine 214, and histidine 219 each contribute to the Zn(2+) site. Residues 281–335 (SEGYIKAIEEHRDKLLKQLEDIRVQKENSLQLQKAQLEQLLADMRTGVEFTEHLL) are a coiled coil. One copy of the Filamin repeat lies at 394–497 (TKEVDPAKCV…VQGSPFTVTV (104 aa)).

The protein belongs to the TRIM/RBCC family.

It is found in the cytoplasm. Its subcellular location is the nucleus. It catalyses the reaction S-ubiquitinyl-[E2 ubiquitin-conjugating enzyme]-L-cysteine + [acceptor protein]-L-lysine = [E2 ubiquitin-conjugating enzyme]-L-cysteine + N(6)-ubiquitinyl-[acceptor protein]-L-lysine.. Functionally, E3 ubiquitin-protein ligase that plays a role in the regulation of inflammatory response. Mechanistically, mediates the 'Lys-48'-linked polyubiquitination of TAB2, a regulatory protein of the kinase TAK1, leading to its degradation via the proteasomal pathway and inhibition of the TLR-mediated inflammatory immune response. May act as a transcriptional repressor in mitogen-activated protein kinase signaling pathway. The sequence is that of E3 ubiquitin-protein ligase TRIM45 (TRIM45) from Bos taurus (Bovine).